The chain runs to 447 residues: Na(+)-translocating NADH-quinone reductase subunit A (447 aa).

This sequence belongs to the NqrA family. In terms of assembly, composed of six subunits; NqrA, NqrB, NqrC, NqrD, NqrE and NqrF.

The catalysed reaction is a ubiquinone + n Na(+)(in) + NADH + H(+) = a ubiquinol + n Na(+)(out) + NAD(+). Functionally, NQR complex catalyzes the reduction of ubiquinone-1 to ubiquinol by two successive reactions, coupled with the transport of Na(+) ions from the cytoplasm to the periplasm. NqrA to NqrE are probably involved in the second step, the conversion of ubisemiquinone to ubiquinol. The sequence is that of Na(+)-translocating NADH-quinone reductase subunit A from Yersinia pestis bv. Antiqua (strain Angola).